The following is a 792-amino-acid chain: 5-methyltetrahydropteroyltriglutamate--homocysteine methyltransferase (792 aa).

Residues 16-19 (RELK) and Lys112 each bind 5-methyltetrahydropteroyltri-L-glutamate. L-homocysteine is bound by residues 432 to 434 (IGS) and Glu485. L-methionine contacts are provided by residues 432-434 (IGS) and Glu485. 5-methyltetrahydropteroyltri-L-glutamate-binding positions include 516–517 (RC) and Trp562. An L-homocysteine-binding site is contributed by Asp600. Asp600 contacts L-methionine. Glu606 contributes to the 5-methyltetrahydropteroyltri-L-glutamate binding site. Zn(2+) is bound by residues His642, Cys644, and Glu666. Catalysis depends on His695, which acts as the Proton donor. Residue Cys727 participates in Zn(2+) binding.

The protein belongs to the vitamin-B12 independent methionine synthase family. Zn(2+) is required as a cofactor.

The enzyme catalyses 5-methyltetrahydropteroyltri-L-glutamate + L-homocysteine = tetrahydropteroyltri-L-glutamate + L-methionine. It participates in amino-acid biosynthesis; L-methionine biosynthesis via de novo pathway; L-methionine from L-homocysteine (MetE route): step 1/1. Catalyzes the transfer of a methyl group from 5-methyltetrahydrofolate to homocysteine resulting in methionine formation. This is 5-methyltetrahydropteroyltriglutamate--homocysteine methyltransferase from Cupriavidus necator (strain ATCC 17699 / DSM 428 / KCTC 22496 / NCIMB 10442 / H16 / Stanier 337) (Ralstonia eutropha).